Consider the following 208-residue polypeptide: Small ribosomal subunit protein uS4 (208 aa).

Residues 98–163 (SRLDNVVYRA…LTPFVIARAV (66 aa)) form the S4 RNA-binding domain.

This sequence belongs to the universal ribosomal protein uS4 family. In terms of assembly, part of the 30S ribosomal subunit. Contacts protein S5. The interaction surface between S4 and S5 is involved in control of translational fidelity.

Its function is as follows. One of the primary rRNA binding proteins, it binds directly to 16S rRNA where it nucleates assembly of the body of the 30S subunit. With S5 and S12 plays an important role in translational accuracy. The sequence is that of Small ribosomal subunit protein uS4 from Acidothermus cellulolyticus (strain ATCC 43068 / DSM 8971 / 11B).